Here is a 212-residue protein sequence, read N- to C-terminus: ATP phosphoribosyltransferase (212 aa).

The protein belongs to the ATP phosphoribosyltransferase family. Short subfamily. As to quaternary structure, heteromultimer composed of HisG and HisZ subunits.

It localises to the cytoplasm. The catalysed reaction is 1-(5-phospho-beta-D-ribosyl)-ATP + diphosphate = 5-phospho-alpha-D-ribose 1-diphosphate + ATP. It participates in amino-acid biosynthesis; L-histidine biosynthesis; L-histidine from 5-phospho-alpha-D-ribose 1-diphosphate: step 1/9. Catalyzes the condensation of ATP and 5-phosphoribose 1-diphosphate to form N'-(5'-phosphoribosyl)-ATP (PR-ATP). Has a crucial role in the pathway because the rate of histidine biosynthesis seems to be controlled primarily by regulation of HisG enzymatic activity. The sequence is that of ATP phosphoribosyltransferase from Citrifermentans bemidjiense (strain ATCC BAA-1014 / DSM 16622 / JCM 12645 / Bem) (Geobacter bemidjiensis).